The chain runs to 162 residues: Interleukin-2 (162 aa).

The signal sequence occupies residues 1–20 (MYKIQLLSCIALTLALVANG). The O-linked (GalNAc...) threonine glycan is linked to T23. Residue N70 is glycosylated (N-linked (GlcNAc...) asparagine). C79 and C134 form a disulfide bridge.

The protein belongs to the IL-2 family.

Its subcellular location is the secreted. Functionally, cytokine produced by activated CD4-positive helper T-cells and to a lesser extend activated CD8-positive T-cells and natural killer (NK) cells that plays pivotal roles in the immune response and tolerance. Binds to a receptor complex composed of either the high-affinity trimeric IL-2R (IL2RA/CD25, IL2RB/CD122 and IL2RG/CD132) or the low-affinity dimeric IL-2R (IL2RB and IL2RG). Interaction with the receptor leads to oligomerization and conformation changes in the IL-2R subunits resulting in downstream signaling starting with phosphorylation of JAK1 and JAK3. In turn, JAK1 and JAK3 phosphorylate the receptor to form a docking site leading to the phosphorylation of several substrates including STAT5. This process leads to activation of several pathways including STAT, phosphoinositide-3-kinase/PI3K and mitogen-activated protein kinase/MAPK pathways. Functions as a T-cell growth factor and can increase NK-cell cytolytic activity as well. Promotes strong proliferation of activated B-cells and subsequently immunoglobulin production. Plays a pivotal role in regulating the adaptive immune system by controlling the survival and proliferation of regulatory T-cells, which are required for the maintenance of immune tolerance. Moreover, participates in the differentiation and homeostasis of effector T-cell subsets, including Th1, Th2, Th17 as well as memory CD8-positive T-cells. The chain is Interleukin-2 (IL2) from Cervus elaphus (Red deer).